The chain runs to 95 residues: Large ribosomal subunit protein eL31 (95 aa).

Belongs to the eukaryotic ribosomal protein eL31 family.

The protein is Large ribosomal subunit protein eL31 (rpl31e) of Pyrococcus horikoshii (strain ATCC 700860 / DSM 12428 / JCM 9974 / NBRC 100139 / OT-3).